We begin with the raw amino-acid sequence, 164 residues long: 6,7-dimethyl-8-ribityllumazine synthase (164 aa).

Residues F28, 62-64 (ALE), and 86-88 (AVI) each bind 5-amino-6-(D-ribitylamino)uracil. Position 91-92 (91-92 (ET)) interacts with (2S)-2-hydroxy-3-oxobutyl phosphate. H94 (proton donor) is an active-site residue. N119 is a binding site for 5-amino-6-(D-ribitylamino)uracil. Position 133 (R133) interacts with (2S)-2-hydroxy-3-oxobutyl phosphate.

The protein belongs to the DMRL synthase family.

The enzyme catalyses (2S)-2-hydroxy-3-oxobutyl phosphate + 5-amino-6-(D-ribitylamino)uracil = 6,7-dimethyl-8-(1-D-ribityl)lumazine + phosphate + 2 H2O + H(+). It participates in cofactor biosynthesis; riboflavin biosynthesis; riboflavin from 2-hydroxy-3-oxobutyl phosphate and 5-amino-6-(D-ribitylamino)uracil: step 1/2. Functionally, catalyzes the formation of 6,7-dimethyl-8-ribityllumazine by condensation of 5-amino-6-(D-ribitylamino)uracil with 3,4-dihydroxy-2-butanone 4-phosphate. This is the penultimate step in the biosynthesis of riboflavin. The polypeptide is 6,7-dimethyl-8-ribityllumazine synthase (Nitrosomonas europaea (strain ATCC 19718 / CIP 103999 / KCTC 2705 / NBRC 14298)).